The sequence spans 172 residues: ATP synthase subunit b (172 aa).

A helical membrane pass occupies residues 5–24 (LLMLLLLGSVSLFANEAAAS).

This sequence belongs to the ATPase B chain family. F-type ATPases have 2 components, F(1) - the catalytic core - and F(0) - the membrane proton channel. F(1) has five subunits: alpha(3), beta(3), gamma(1), delta(1), epsilon(1). F(0) has three main subunits: a(1), b(2) and c(10-14). The alpha and beta chains form an alternating ring which encloses part of the gamma chain. F(1) is attached to F(0) by a central stalk formed by the gamma and epsilon chains, while a peripheral stalk is formed by the delta and b chains.

The protein resides in the cell inner membrane. In terms of biological role, f(1)F(0) ATP synthase produces ATP from ADP in the presence of a proton or sodium gradient. F-type ATPases consist of two structural domains, F(1) containing the extramembraneous catalytic core and F(0) containing the membrane proton channel, linked together by a central stalk and a peripheral stalk. During catalysis, ATP synthesis in the catalytic domain of F(1) is coupled via a rotary mechanism of the central stalk subunits to proton translocation. Component of the F(0) channel, it forms part of the peripheral stalk, linking F(1) to F(0). This Nitratiruptor sp. (strain SB155-2) protein is ATP synthase subunit b.